The sequence spans 1021 residues: Chondroitin sulfate ABC endolyase (1021 aa).

Positions Met-1 to Ala-24 are cleaved as a signal peptide. 4 residues coordinate Na(+): His-43, Met-70, Gln-73, and Asp-211. Residue His-501 is the Proton acceptor of the active site. Tyr-508 acts as the Proton donor in catalysis.

This sequence belongs to the polysaccharide lyase 8 family. Monomer.

It is found in the periplasm. The enzyme catalyses Endolytic cleavage of (1-&gt;4)-beta-galactosaminic bonds between N-acetylgalactosamine and either D-glucuronic acid or L-iduronic acid to produce a mixture of Delta(4)-unsaturated oligosaccharides of different sizes that are ultimately degraded to Delta(4)-unsaturated tetra- and disaccharides.. With respect to regulation, is inhibited by Zn(2+), Ni(2+), Fe(2+) and Cu(2+). Its function is as follows. Endolytic, broad-specificity glycosaminoglycan lyase, which degrades the polysaccharides chondroitin, chondroitin-4-sulfate, chondroitin-6-sulfate, dermatan sulfate and to a lesser extent hyaluronan, by beta-elimination of 1,4-hexosaminidic bond to unsaturated tetrasaccharides and disaccharides. Is not active against keratan sulfate, heparan sulfate, and heparin. Is able to promote functional recovery in the injured central nervous system (CNS), via its role in the disruption of the normal organization of the extracellular matrix (ECM). The polypeptide is Chondroitin sulfate ABC endolyase (Proteus vulgaris).